We begin with the raw amino-acid sequence, 347 residues long: NHL repeat-containing protein 3 (347 aa).

A signal peptide spans 1-25; it reads MARFWVCVAGAGFFLAFLVLHSRFC. Residue asparagine 32 is glycosylated (N-linked (GlcNAc...) asparagine). One copy of the NHL 1 repeat lies at 47–93; that stretch reads RLDVGWPKHPEYFTGTTFCVAVDSLNGLVYIGQRGDNIPKILVFTED. Asparagine 101 carries N-linked (GlcNAc...) asparagine glycosylation. NHL repeat units lie at residues 150 to 196 and 200 to 243; these read TPGK…LSQD and LWLH…FDKD. N-linked (GlcNAc...) asparagine glycans are attached at residues asparagine 206 and asparagine 278. An NHL 4 repeat occupies 294 to 338; that stretch reads GECSVISTIQLADQVLPHLLEVDRKTGAVYVAEIGAKQVQKYVPL.

The protein resides in the secreted. The sequence is that of NHL repeat-containing protein 3 (NHLRC3) from Homo sapiens (Human).